A 281-amino-acid polypeptide reads, in one-letter code: Probable feruloyl esterase A (281 aa).

Positions 1–21 (MKQFSAKYALILLATAGQALA) are cleaved as a signal peptide. 3 disulfides stabilise this stretch: Cys50-Cys279, Cys112-Cys115, and Cys248-Cys255. Asp98 is a substrate binding site. A glycan (N-linked (GlcNAc...) asparagine) is linked at Asn100. Tyr101 is a binding site for substrate. Ser154 (nucleophile) is an active-site residue. Asp215 (charge relay system) is an active-site residue. Substrate is bound at residue His268. Catalysis depends on His268, which acts as the Charge relay system.

This sequence belongs to the AB hydrolase superfamily. FaeA family.

It localises to the secreted. It carries out the reaction feruloyl-polysaccharide + H2O = ferulate + polysaccharide.. Its function is as follows. Involved in degradation of plant cell walls. Hydrolyzes the feruloyl-arabinose ester bond in arabinoxylans, and the feruloyl-galactose ester bond in pectin. This Aspergillus niger (strain ATCC MYA-4892 / CBS 513.88 / FGSC A1513) protein is Probable feruloyl esterase A (faeA).